The primary structure comprises 31 residues: Cytochrome b6-f complex subunit 6 (31 aa).

The helical transmembrane segment at 3-23 (ILIGYIILLACAFGLAAGLFF) threads the bilayer.

It belongs to the PetL family. As to quaternary structure, the 4 large subunits of the cytochrome b6-f complex are cytochrome b6, subunit IV (17 kDa polypeptide, PetD), cytochrome f and the Rieske protein, while the 4 small subunits are PetG, PetL, PetM and PetN. The complex functions as a dimer.

Its subcellular location is the plastid. The protein resides in the chloroplast thylakoid membrane. In terms of biological role, component of the cytochrome b6-f complex, which mediates electron transfer between photosystem II (PSII) and photosystem I (PSI), cyclic electron flow around PSI, and state transitions. PetL is important for photoautotrophic growth as well as for electron transfer efficiency and stability of the cytochrome b6-f complex. The polypeptide is Cytochrome b6-f complex subunit 6 (Rhodomonas salina (Cryptomonas salina)).